A 901-amino-acid polypeptide reads, in one-letter code: HTH-type transcriptional regulator MalT (901 aa).

39–46 (SPAGYGKT) is an ATP binding site. The HTH luxR-type domain maps to 829-894 (ELIRTSPLTQ…DAVQHAQQLL (66 aa)). Positions 853–872 (NEQIAGELAVAATTIKTHIR) form a DNA-binding region, H-T-H motif.

This sequence belongs to the MalT family. Monomer in solution. Oligomerizes to an active state in the presence of the positive effectors ATP and maltotriose.

Activated by ATP and maltotriose, which are both required for DNA binding. Its function is as follows. Positively regulates the transcription of the maltose regulon whose gene products are responsible for uptake and catabolism of malto-oligosaccharides. Specifically binds to the promoter region of its target genes, recognizing a short DNA motif called the MalT box. The chain is HTH-type transcriptional regulator MalT from Enterobacter sp. (strain 638).